Here is a 175-residue protein sequence, read N- to C-terminus: NADH-ubiquinone oxidoreductase chain 6 (175 aa).

6 helical membrane-spanning segments follow: residues 1–21 (MMYIVFIMSVLYVVGFIGFSS), 24–44 (SPVYGGMSLIVSGGLGCGIIM), 51–71 (LGLVVFLVYLGGMMVVFGYTI), 87–107 (VVLSAFLVGLLMEIFMIVWLF), 113–133 (LVGFYFGGLEDLVVLGEGSFG), and 148–168 (YGFWFLAMAGWMLFVSIFIAI).

It belongs to the complex I subunit 6 family. As to quaternary structure, core subunit of respiratory chain NADH dehydrogenase (Complex I) which is composed of 45 different subunits.

The protein localises to the mitochondrion inner membrane. It carries out the reaction a ubiquinone + NADH + 5 H(+)(in) = a ubiquinol + NAD(+) + 4 H(+)(out). In terms of biological role, core subunit of the mitochondrial membrane respiratory chain NADH dehydrogenase (Complex I) which catalyzes electron transfer from NADH through the respiratory chain, using ubiquinone as an electron acceptor. Essential for the catalytic activity and assembly of complex I. This is NADH-ubiquinone oxidoreductase chain 6 (MT-ND6) from Mammuthus primigenius (Siberian woolly mammoth).